A 557-amino-acid polypeptide reads, in one-letter code: Interferon alpha/beta receptor 1 (557 aa).

The first 27 residues, 1–27 (MMVVLLGATTLVLVAVAPWVLSAAAGG), serve as a signal peptide directing secretion. The Extracellular segment spans residues 28–436 (KNLKSPQKVE…EKTKPGNTSK (409 aa)). Fibronectin type-III domains are found at residues 32–126 (SPQK…FRKA), 127–227 (QIGP…TVEN), 231–329 (PPEN…TEIQ), and 331–432 (FLLP…TKPG). N50, N58, N81, N88, N110, and N172 each carry an N-linked (GlcNAc...) asparagine glycan. An intrachain disulfide couples C79 to C87. C199 and C220 are disulfide-bonded. N-linked (GlcNAc...) asparagine glycosylation occurs at N254. C283 and C291 are joined by a disulfide. N-linked (GlcNAc...) asparagine glycosylation is found at N313, N314, N376, N416, and N433. A disulfide bridge links C403 with C426. The chain crosses the membrane as a helical span at residues 437–457 (IWLIVGICIALFALPFVIYAA). Residues 458–557 (KVFLRCINYV…TSEELQQDFV (100 aa)) are Cytoplasmic-facing. The S-palmitoyl cysteine moiety is linked to residue C463. Residues Y466 and Y481 each carry the phosphotyrosine; by TYK2 modification. Residues 491–500 (LLSTSEEQIE) are important for interaction with TYK2. S495 is subject to Phosphoserine. Glycyl lysine isopeptide (Lys-Gly) (interchain with G-Cter in ubiquitin) cross-links involve residues K501, K525, and K526. The segment at 516-557 (ETNQTDEDHKKYSSQTSQDSGNYSNEDESESKTSEELQQDFV) is disordered. The segment covering 528–539 (SSQTSQDSGNYS) has biased composition (polar residues). A Phosphoserine modification is found at S535.

This sequence belongs to the type II cytokine receptor family. As to quaternary structure, heterodimer with IFNAR2; forming the receptor for type I interferon. Interacts with TYK2. Interacts with STAT1 and STAT2; the interaction requires its phosphorylation at Tyr-466. Interacts (serine-phosphorylated form) with FBXW11, the substrate recognition component of a SCF (SKP1-CUL1-F-box protein) E3 ubiquitin-protein ligase complex. Interacts with SHMT2; this promotes interaction with ABRAXAS2 and the BRISC complex. Interacts with TRIM10; this interaction prevents association between IFNAR1 and TYK2. In terms of processing, ubiquitinated, leading to its internalization and degradation. Polyubiquitinated via 'Lys-48'-linked and 'Lys-63'-linked ubiquitin chains, leading to receptor internalization and lysosomal degradation. The 'Lys-63'-linked ubiquitin chains are cleaved off by the BRISC complex. Post-translationally, phosphorylated on tyrosine residues in response to interferon-binding: phosphorylation by TYK2 tyrosine kinase creates docking sites for STAT proteins. Phosphorylated on serine residues in response to interferon binding; this promotes interaction with FBXW11 and ubiquitination. Palmitoylation at Cys-463 is required for the activation of STAT1 and STAT2. In terms of tissue distribution, IFN receptors are present in all tissues and even on the surface of most IFN-resistant cells. Isoform 1, isoform 2 and isoform 3 are expressed in the IFN-alpha sensitive myeloma cell line U266B1. Isoform 2 and isoform 3 are expressed in the IFN-alpha resistant myeloma cell line U266R. Isoform 1 is not expressed in IFN-alpha resistant myeloma cell line U266R.

Its subcellular location is the cell membrane. It localises to the late endosome. The protein resides in the lysosome. Its function is as follows. Together with IFNAR2, forms the heterodimeric receptor for type I interferons (including interferons alpha, beta, epsilon, omega and kappa). Type I interferon binding activates the JAK-STAT signaling cascade, resulting in transcriptional activation or repression of interferon-regulated genes that encode the effectors of the interferon response. Mechanistically, type I interferon-binding brings the IFNAR1 and IFNAR2 subunits into close proximity with one another, driving their associated Janus kinases (JAKs) (TYK2 bound to IFNAR1 and JAK1 bound to IFNAR2) to cross-phosphorylate one another. The activated kinases phosphorylate specific tyrosine residues on the intracellular domains of IFNAR1 and IFNAR2, forming docking sites for the STAT transcription factors. STAT proteins are then phosphorylated by the JAKs, promoting their translocation into the nucleus to regulate expression of interferon-regulated genes. Can also act independently of IFNAR2: form an active IFNB1 receptor by itself and activate a signaling cascade that does not involve activation of the JAK-STAT pathway. The chain is Interferon alpha/beta receptor 1 (IFNAR1) from Homo sapiens (Human).